Reading from the N-terminus, the 415-residue chain is tRNA(Ile2) 2-agmatinylcytidine synthetase TiaS (415 aa).

This sequence belongs to the TiaS family.

It localises to the cytoplasm. The catalysed reaction is cytidine(34) in tRNA(Ile2) + agmatine + ATP + H2O = 2-agmatinylcytidine(34) in tRNA(Ile2) + AMP + 2 phosphate + 2 H(+). Functionally, ATP-dependent agmatine transferase that catalyzes the formation of 2-agmatinylcytidine (agm2C) at the wobble position (C34) of tRNA(Ile2), converting the codon specificity from AUG to AUA. The chain is tRNA(Ile2) 2-agmatinylcytidine synthetase TiaS from Methanocorpusculum labreanum (strain ATCC 43576 / DSM 4855 / Z).